The sequence spans 122 residues: Lectin A (122 aa).

Tyr-38 is a binding site for Ca(2+). Residues Glu-44, Gln-57, and Asp-96 each coordinate an alpha-D-galactoside. The Ca(2+) site is built by Asp-96, Thr-100, Asp-103, and Asn-104. Asp-103 lines the an alpha-D-galactoside pocket.

This sequence belongs to the LecA/PllA lectin family. As to quaternary structure, homotetramer.

Its function is as follows. Lectin that specifically binds alpha-galactoside-terminating glycoconjugates. Shows high apparent binding to the alpha-Gal epitope (Gal-alpha-1,3-Gal-beta-1,4-GlcNAc terminating glycans) as well as to Gal-alpha-1,4-GlcNAc and Gal-alpha-1,3-GalNAc. Gal-alpha-1,3-GalNAc may be one natural ligand bound by PllA both in the nematode symbiont and in infected insects. The sequence is that of Lectin A from Photorhabdus laumondii subsp. laumondii (strain DSM 15139 / CIP 105565 / TT01) (Photorhabdus luminescens subsp. laumondii).